A 185-amino-acid chain; its full sequence is Elongation factor P (185 aa).

This sequence belongs to the elongation factor P family.

It localises to the cytoplasm. It participates in protein biosynthesis; polypeptide chain elongation. Functionally, involved in peptide bond synthesis. Stimulates efficient translation and peptide-bond synthesis on native or reconstituted 70S ribosomes in vitro. Probably functions indirectly by altering the affinity of the ribosome for aminoacyl-tRNA, thus increasing their reactivity as acceptors for peptidyl transferase. The chain is Elongation factor P from Caldicellulosiruptor bescii (strain ATCC BAA-1888 / DSM 6725 / KCTC 15123 / Z-1320) (Anaerocellum thermophilum).